The sequence spans 434 residues: Methylenetetrahydrofolate--tRNA-(uracil-5-)-methyltransferase TrmFO (434 aa).

Residue 9 to 14 (GAGLAG) coordinates FAD.

This sequence belongs to the MnmG family. TrmFO subfamily. It depends on FAD as a cofactor.

The protein localises to the cytoplasm. The catalysed reaction is uridine(54) in tRNA + (6R)-5,10-methylene-5,6,7,8-tetrahydrofolate + NADH + H(+) = 5-methyluridine(54) in tRNA + (6S)-5,6,7,8-tetrahydrofolate + NAD(+). The enzyme catalyses uridine(54) in tRNA + (6R)-5,10-methylene-5,6,7,8-tetrahydrofolate + NADPH + H(+) = 5-methyluridine(54) in tRNA + (6S)-5,6,7,8-tetrahydrofolate + NADP(+). Its function is as follows. Catalyzes the folate-dependent formation of 5-methyl-uridine at position 54 (M-5-U54) in all tRNAs. The protein is Methylenetetrahydrofolate--tRNA-(uracil-5-)-methyltransferase TrmFO of Fusobacterium nucleatum subsp. nucleatum (strain ATCC 25586 / DSM 15643 / BCRC 10681 / CIP 101130 / JCM 8532 / KCTC 2640 / LMG 13131 / VPI 4355).